We begin with the raw amino-acid sequence, 1025 residues long: MKFFALFIYRPVATILLSVAITLCGILGFRMLPVAPLPQVDFPVIMVSASLPGASPETMASSVATPLERSLGRIAGVSEMTSSSSLGSTRIILQFDFDRDINGAARDVQAAINAAQSLLPSGMPSRPTYRKANPSDAPIMILTLTSDTYSQGELYDFASTQLAPTISQIDGVGDVDVGGSSLPAVRVGLNPQALFNQGVSLDDVRTAISNANVRKPQGALEDDTHRWQIQTNDELKTAAEYQPLIIHYNNGGAVRLGDVATVTDSVQDVRNAGMTNAKPAILLMIRKLPEANIIQTVDSIRARLPELQSTIPAAIDLQIAQDRSPTIRASLEEVEQTLVISVALVILVVFLFLRSGRATIIPAVAVPVSLIGTFAAMYLCGFSLNNLSLMALTIATGFVVDDAIVVLENIARHLEAGMKPLQAALQGTREVGFTVLSMSLSLVAVFLPLLLMGGLPGRLLREFAVTLSVAIGISLLVSLTLTPMMCGWMLKASKPREQKRLRGFGRMLVALQQGYGKSLKWVLNHTRLVGAVLLGTIALNIWLYISIPKTFFPEQDTGVLMGGIQADQSISFQAMRGKLQDFMKIIRDEPAVDNVTGFTGGSRVNSGMMFITLKPRGERSETAQQIIDRLRKKLAKEPGANLFLMAVQDIRVGGRQANASYQYTLLSDDLAALREWEPKIRKKLATLPELADVNSDQEDNGAEMNLIYDRDTMARLGIDVQAANSLLNNAFGQRQISTIYQPMNQYKVVMEVDPRYTQDISALEKMFVINNEGKAIPLSYFAKWQPANAPLSVNHQGLSAASTISFNLPTGKSLSDASAAIDRAMTQLGVPSTVRGSFAGTAQVFQETMNSQVILIIAAIATVYIVLGILYESYVHPLTILSTLPSAGVGALLALELFNAPFSLIALIGIMLLIGIVKKNAIMMVDFALEAQRHGNLTPQEAIFQACLLRFRPIMMTTLAALFGALPLVLSGGDGSELRQPLGITIVGGLVMSQLLTLYTTPVVYLFFDRLRLRFSRKPKQAVTE.

The next 12 helical transmembrane spans lie at 3–23, 333–353, 360–380, 387–407, 431–451, 463–483, 528–548, 853–873, 875–895, 897–917, 953–973, and 984–1004; these read FFAL…AITL, EVEQ…FLFL, IIPA…MYLC, LSLM…IVVL, VGFT…PLLL, FAVT…TLTP, LVGA…ISIP, VILI…LYES, VHPL…LLAL, LFNA…IGIV, PIMM…LSGG, and ITIV…TPVV.

The protein belongs to the resistance-nodulation-cell division (RND) (TC 2.A.6) family. MdtC subfamily. In terms of assembly, part of a tripartite efflux system composed of MdtA, MdtB and MdtC. MdtC forms a heteromultimer with MdtB.

It is found in the cell inner membrane. In terms of biological role, the MdtABC tripartite complex confers resistance against novobiocin and deoxycholate. The polypeptide is Multidrug resistance protein MdtC (Escherichia coli O81 (strain ED1a)).